The chain runs to 657 residues: Translation factor GUF1, mitochondrial (657 aa).

Residues 1-39 (MRGCLQSVKWLTSALRPSQSLASSTRYPRRLLSTSAPRN) constitute a mitochondrion transit peptide. The region spanning 59 to 239 (ERFRNFCIVA…TVIEQIPAPV (181 aa)) is the tr-type G domain. Residues 121-128 (HQGEDYLL), 185-189 (INKVD), and 239-242 (VGDR) each bind GTP.

The protein belongs to the TRAFAC class translation factor GTPase superfamily. Classic translation factor GTPase family. LepA subfamily.

It localises to the mitochondrion inner membrane. The enzyme catalyses GTP + H2O = GDP + phosphate + H(+). In terms of biological role, promotes mitochondrial protein synthesis. May act as a fidelity factor of the translation reaction, by catalyzing a one-codon backward translocation of tRNAs on improperly translocated ribosomes. Binds to mitochondrial ribosomes in a GTP-dependent manner. The protein is Translation factor GUF1, mitochondrial of Ajellomyces capsulatus (strain H143) (Darling's disease fungus).